The primary structure comprises 397 residues: Acetate kinase (397 aa).

Residue Asn8 coordinates Mg(2+). Lys15 is an ATP binding site. Arg89 is a binding site for substrate. Residue Asp146 is the Proton donor/acceptor of the active site. Residues 206 to 210 (HLGNG), 280 to 282 (DMR), and 328 to 332 (GVGEN) contribute to the ATP site. Glu382 lines the Mg(2+) pocket.

Belongs to the acetokinase family. As to quaternary structure, homodimer. The cofactor is Mg(2+). It depends on Mn(2+) as a cofactor.

The protein localises to the cytoplasm. It catalyses the reaction acetate + ATP = acetyl phosphate + ADP. It functions in the pathway metabolic intermediate biosynthesis; acetyl-CoA biosynthesis; acetyl-CoA from acetate: step 1/2. Its function is as follows. Catalyzes the formation of acetyl phosphate from acetate and ATP. Can also catalyze the reverse reaction. The chain is Acetate kinase from Leifsonia xyli subsp. xyli (strain CTCB07).